The following is a 165-amino-acid chain: Coatomer subunit zeta (165 aa).

This sequence belongs to the adaptor complexes small subunit family. In terms of assembly, oligomeric complex that consists of at least the alpha, beta, beta', gamma, delta, epsilon and zeta subunits.

The protein localises to the cytoplasm. The protein resides in the golgi apparatus membrane. It is found in the cytoplasmic vesicle. Its subcellular location is the COPI-coated vesicle membrane. The coatomer is a cytosolic protein complex that binds to dilysine motifs and reversibly associates with Golgi non-clathrin-coated vesicles, which further mediate biosynthetic protein transport from the ER, via the Golgi up to the trans Golgi network. Coatomer complex is required for budding from Golgi membranes, and is essential for the retrograde Golgi-to-ER transport of dilysine-tagged proteins. The zeta subunit may be involved in regulating the coat assembly and, hence, the rate of biosynthetic protein transport due to its association-dissociation properties with the coatomer complex. This is Coatomer subunit zeta from Encephalitozoon cuniculi (strain GB-M1) (Microsporidian parasite).